A 211-amino-acid polypeptide reads, in one-letter code: Ras-related protein RABB1b (211 aa).

13–20 (GDTGVGKS) lines the GTP pocket. The Effector region motif lies at 35–43 (HDLTIGVEF). GTP is bound by residues 61–65 (DTAGQ), 119–122 (NKCD), and 149–150 (SA). 2 S-geranylgeranyl cysteine lipidation sites follow: C209 and C210.

This sequence belongs to the small GTPase superfamily. Rab family.

The protein resides in the cell membrane. Its function is as follows. Intracellular vesicle trafficking and protein transport. In Arabidopsis thaliana (Mouse-ear cress), this protein is Ras-related protein RABB1b (RABB1B).